The following is a 488-amino-acid chain: Malonate-semialdehyde dehydrogenase (488 aa).

The NAD(+) site is built by Ala150, Phe152, Lys176, Glu179, Arg180, Ser229, and Thr251. Residue Cys284 is the Nucleophile of the active site. An NAD(+)-binding site is contributed by Glu382.

The protein belongs to the aldehyde dehydrogenase family. IolA subfamily. As to quaternary structure, homotetramer.

The enzyme catalyses 3-oxopropanoate + NAD(+) + CoA + H2O = hydrogencarbonate + acetyl-CoA + NADH + H(+). It carries out the reaction 2-methyl-3-oxopropanoate + NAD(+) + CoA + H2O = propanoyl-CoA + hydrogencarbonate + NADH + H(+). The protein operates within polyol metabolism; myo-inositol degradation into acetyl-CoA; acetyl-CoA from myo-inositol: step 7/7. Functionally, catalyzes the oxidation of malonate semialdehyde (MSA) and methylmalonate semialdehyde (MMSA) into acetyl-CoA and propanoyl-CoA, respectively. Is involved in a myo-inositol catabolic pathway. Bicarbonate, and not CO2, is the end-product of the enzymatic reaction. The chain is Malonate-semialdehyde dehydrogenase from Listeria innocua serovar 6a (strain ATCC BAA-680 / CLIP 11262).